The sequence spans 269 residues: Polyamine aminopropyltransferase (269 aa).

The 226-residue stretch at 1–226 folds into the PABS domain; it reads MVWFFEYYDG…ALWSFIIGGE (226 aa). Residue Gln28 participates in S-methyl-5'-thioadenosine binding. Residues His59 and Asp83 each coordinate spermidine. S-methyl-5'-thioadenosine is bound by residues Asp102 and 133-134; that span reads DG. The active-site Proton acceptor is the Asp150. Spermidine is bound at residue 150 to 153; sequence DSTD.

It belongs to the spermidine/spermine synthase family. As to quaternary structure, homodimer or homotetramer.

It is found in the cytoplasm. The enzyme catalyses S-adenosyl 3-(methylsulfanyl)propylamine + putrescine = S-methyl-5'-thioadenosine + spermidine + H(+). Its pathway is amine and polyamine biosynthesis; spermidine biosynthesis; spermidine from putrescine: step 1/1. Catalyzes the irreversible transfer of a propylamine group from the amino donor S-adenosylmethioninamine (decarboxy-AdoMet) to putrescine (1,4-diaminobutane) to yield spermidine. In Archaeoglobus fulgidus (strain ATCC 49558 / DSM 4304 / JCM 9628 / NBRC 100126 / VC-16), this protein is Polyamine aminopropyltransferase.